We begin with the raw amino-acid sequence, 251 residues long: Uridylate kinase (251 aa).

26–29 (KLGG) is a binding site for ATP. Glycine 67 contacts UMP. Glycine 68 and arginine 72 together coordinate ATP. UMP is bound by residues aspartate 87 and 148–155 (MGLPYFST). ATP contacts are provided by phenylalanine 181 and aspartate 184.

It belongs to the UMP kinase family. In terms of assembly, homohexamer.

The protein localises to the cytoplasm. It carries out the reaction UMP + ATP = UDP + ADP. It functions in the pathway pyrimidine metabolism; CTP biosynthesis via de novo pathway; UDP from UMP (UMPK route): step 1/1. Inhibited by UTP. Functionally, catalyzes the reversible phosphorylation of UMP to UDP. This is Uridylate kinase from Mycolicibacterium vanbaalenii (strain DSM 7251 / JCM 13017 / BCRC 16820 / KCTC 9966 / NRRL B-24157 / PYR-1) (Mycobacterium vanbaalenii).